The primary structure comprises 222 residues: Ribosomal RNA small subunit methyltransferase G (222 aa).

S-adenosyl-L-methionine is bound by residues glycine 84, phenylalanine 89, 141–142 (VE), and arginine 154.

Belongs to the methyltransferase superfamily. RNA methyltransferase RsmG family.

It localises to the cytoplasm. The catalysed reaction is guanosine(527) in 16S rRNA + S-adenosyl-L-methionine = N(7)-methylguanosine(527) in 16S rRNA + S-adenosyl-L-homocysteine. In terms of biological role, specifically methylates the N7 position of guanine in position 527 of 16S rRNA. In Bradyrhizobium sp. (strain ORS 278), this protein is Ribosomal RNA small subunit methyltransferase G.